The primary structure comprises 887 residues: Autotaxin (887 aa).

A signal peptide spans 1–27 (MARQGCLGSFQVISLFTFAISVNICLG). A propeptide spans 28 to 35 (FTASRIKR) (removed by furin). The N-linked (GlcNAc...) asparagine glycan is linked to Asn-53. SMB domains are found at residues 54–97 (TSGS…LKTA) and 98–142 (RGWE…GESH). 10 disulfides stabilise this stretch: Cys-58–Cys-75, Cys-62–Cys-93, Cys-73–Cys-86, Cys-79–Cys-85, Cys-102–Cys-119, Cys-107–Cys-137, Cys-117–Cys-130, Cys-123–Cys-129, Cys-148–Cys-194, and Cys-156–Cys-350. Residues 126-128 (RGD) carry the Cell attachment site motif. The segment at 144–501 (VDDDCEEIKV…PTFKYRTKVP (358 aa)) is phosphodiesterase. The Zn(2+) site is built by Asp-171 and Thr-209. Residue Thr-209 is the Nucleophile of the active site. 1-(9Z-octadecenoyl)-sn-glycero-3-phosphate-binding residues include Thr-209, Asn-230, and Asp-311. 1-hexadecanoyl-sn-glycero-3-phosphate is bound by residues Thr-209, Asn-230, and Asp-311. Residues Thr-209, Asn-230, and Asp-311 each coordinate 1-tetradecanoyl-sn-glycerol 3-phosphate. Zn(2+) contacts are provided by Asp-311, His-315, Asp-358, and His-359. 5 disulfides stabilise this stretch: Cys-366–Cys-468, Cys-413–Cys-830, Cys-566–Cys-691, Cys-568–Cys-676, and Cys-799–Cys-809. Residues Asn-398 and Asn-410 are each glycosylated (N-linked (GlcNAc...) asparagine). Zn(2+) is bound at residue His-474. His-474 is a 1-(9Z-octadecenoyl)-sn-glycero-3-phosphate binding site. His-474 serves as a coordination point for 1-hexadecanoyl-sn-glycero-3-phosphate. His-474 contributes to the 1-tetradecanoyl-sn-glycerol 3-phosphate binding site. N-linked (GlcNAc...) asparagine glycosylation occurs at Asn-524. Residues 586–607 (HTKGSTEAETGKFRGSKHENKK) are compositionally biased toward basic and acidic residues. The disordered stretch occupies residues 586-615 (HTKGSTEAETGKFRGSKHENKKNLNGSVEP). A glycan (N-linked (GlcNAc...) asparagine) is linked at Asn-610. Residues 622–887 (LYGRPAVLYR…TYLHTYESEI (266 aa)) are nuclease-like domain. Ca(2+) contacts are provided by Asp-764, Asn-766, Asp-768, Leu-770, and Asp-772. Asn-831 carries N-linked (GlcNAc...) asparagine glycosylation. A required for secretion region spans residues 854–875 (IEHLTGLDFYRKTSRSYSEILT).

Belongs to the nucleotide pyrophosphatase/phosphodiesterase family. Zn(2+) serves as cofactor. Requires Ca(2+) as cofactor. N-glycosylation, but not furin-cleavage, plays a critical role on secretion and on lysoPLD activity. In terms of processing, the interdomain disulfide bond between Cys-413 and Cys-830 is essential for catalytic activity. In terms of tissue distribution, abundantly expressed in cerebrum and cerebellum. Localized in secretory epithelial cells in the brain and the eye including choroid plexus epithelial cells, ciliary epithelial cells, iris pigment epithelial cells, and retinal pigment cells.

It is found in the secreted. The catalysed reaction is a 1-O-alkyl-sn-glycero-3-phosphoethanolamine + H2O = a 1-O-alkyl-sn-glycero-3-phosphate + ethanolamine + H(+). The enzyme catalyses a 1-acyl-sn-glycero-3-phosphoethanolamine + H2O = a 1-acyl-sn-glycero-3-phosphate + ethanolamine + H(+). It catalyses the reaction 1-(9Z-octadecenoyl)-sn-glycero-3-phosphoethanolamine + H2O = 1-(9Z-octadecenoyl)-sn-glycero-3-phosphate + ethanolamine + H(+). It carries out the reaction a 1-O-alkyl-sn-glycero-3-phosphocholine + H2O = a 1-O-alkyl-sn-glycero-3-phosphate + choline + H(+). The catalysed reaction is 1-O-(9Z-octadecenyl)-sn-glycero-3-phosphocholine + H2O = 1-O-(9Z-octadecenyl)-sn-glycero-3-phosphate + choline + H(+). The enzyme catalyses 1-O-hexadecyl-sn-glycero-3-phosphocholine + H2O = 1-O-hexadecyl-sn-glycero-3-phosphate + choline + H(+). It catalyses the reaction a 1-O-(1Z-alkenyl)-sn-glycero-3-phosphocholine + H2O = a 1-O-(1Z-alkenyl)-sn-glycero-3-phosphate + choline + H(+). It carries out the reaction a 1-acyl-sn-glycero-3-phosphocholine + H2O = a 1-acyl-sn-glycero-3-phosphate + choline + H(+). The catalysed reaction is 1-dodecanoyl-sn-glycero-3-phosphocholine + H2O = 1-dodecanoyl-sn-glycerol 3-phosphate + choline + H(+). The enzyme catalyses 1-(9Z-octadecenoyl)-sn-glycero-3-phosphocholine + H2O = 1-(9Z-octadecenoyl)-sn-glycero-3-phosphate + choline + H(+). It catalyses the reaction 1-tetradecanoyl-sn-glycero-3-phosphocholine + H2O = 1-tetradecanoyl-sn-glycerol 3-phosphate + choline + H(+). It carries out the reaction 1-decanoyl-sn-glycero-3-phosphocholine + H2O = 1-decanoyl-sn-glycero-3-phosphate + choline + H(+). The catalysed reaction is 1-octadecanoyl-sn-glycero-3-phosphocholine + H2O = 1-octadecanoyl-sn-glycero-3-phosphate + choline + H(+). The enzyme catalyses 1-hexadecanoyl-sn-glycero-3-phosphocholine + H2O = 1-hexadecanoyl-sn-glycero-3-phosphate + choline + H(+). It catalyses the reaction 1-hexanoyl-sn-glycero-3-phosphocholine + H2O = 1-hexanoyl-sn-glycero-3-phosphate + choline + H(+). It carries out the reaction 1-(9Z,12Z)-octadecadienoyl-sn-glycero-3-phosphocholine + H2O = 1-(9Z,12Z)-octadecadienoyl-sn-glycero-3-phosphate + choline + H(+). The catalysed reaction is sphing-4-enine-phosphocholine + H2O = sphing-4-enine 1-phosphate + choline + H(+). The enzyme catalyses 1-(5Z,8Z,11Z,14Z-eicosatetraenoyl)-sn-glycero-3-phosphocholine + H2O = 1-(5Z,8Z,11Z,14Z-eicosatetraenoyl)-sn-glycero-3-phosphate + choline + H(+). It catalyses the reaction a 2-acyl-sn-glycero-3-phosphocholine + H2O = a 2-acyl-sn-glycerol 3-phosphate + choline + H(+). It carries out the reaction a 1,2-diacyl-sn-glycero-3-phosphocholine + H2O = a 1,2-diacyl-sn-glycero-3-phosphate + choline + H(+). The catalysed reaction is 1,2-dioctanoyl-sn-glycero-3-phosphocholine + H2O = 1,2-dioctanoyl-sn-glycero-3-phosphate + choline + H(+). The enzyme catalyses 1,2-didecanoyl-sn-glycero-3-phosphocholine + H2O = 1,2-didecanoyl-sn-glycero-3-phosphate + choline + H(+). It catalyses the reaction a 1-acyl-sn-glycero-3-phospho-L-serine + H2O = a 1-acyl-sn-glycero-3-phosphate + L-serine + H(+). It carries out the reaction 1-(9Z-octadecenoyl)-sn-glycero-3-phospho-L-serine + H2O = 1-(9Z-octadecenoyl)-sn-glycero-3-phosphate + L-serine + H(+). The catalysed reaction is a 2-acyl-sn-glycero-3-phospho-L-serine + H2O = a 2-acyl-sn-glycerol 3-phosphate + L-serine + H(+). Inhibited by vanadate. Inhibited by micromolar levels of bile salts, such as tauroursodeoxycholate. Not inhibited by taurodeoxycholate. Not inhibited by hydroxysterols, such as 7-hydroxycholesterol, testosterone, dexamethasone and prednisolone. Inhibited by EDTA and EGTA. Secreted lysophospholipase D that hydrolyzes lysophospholipids to produce the signaling molecule lysophosphatidic acid (LPA) in extracellular fluids. Its major substrate is lysophosphatidylcholine. Can also act on sphingosylphosphorylcholine producing sphingosine-1-phosphate, a modulator of cell motility. Can hydrolyze, in vitro, bis-pNPP, to some extent pNP-TMP, and barely ATP. Involved in several motility-related processes such as angiogenesis and neurite outgrowth. Acts as an angiogenic factor by stimulating migration of smooth muscle cells and microtubule formation. Stimulates migration of melanoma cells, probably via a pertussis toxin-sensitive G protein. May have a role in induction of parturition. Possible involvement in cell proliferation and adipose tissue development. Required for LPA production in activated platelets, cleaves the sn-1 lysophospholipids to generate sn-1 lysophosphatidic acids containing predominantly 18:2 and 20:4 fatty acids. Shows a preference for the sn-1 to the sn-2 isomer of 1-O-alkyl-sn-glycero-3-phosphocholine (lyso-PAF). This is Autotaxin from Rattus norvegicus (Rat).